The sequence spans 442 residues: Probable glycine dehydrogenase (decarboxylating) subunit 1 (442 aa).

It belongs to the GcvP family. N-terminal subunit subfamily. As to quaternary structure, the glycine cleavage system is composed of four proteins: P, T, L and H. In this organism, the P 'protein' is a heterodimer of two subunits.

The enzyme catalyses N(6)-[(R)-lipoyl]-L-lysyl-[glycine-cleavage complex H protein] + glycine + H(+) = N(6)-[(R)-S(8)-aminomethyldihydrolipoyl]-L-lysyl-[glycine-cleavage complex H protein] + CO2. In terms of biological role, the glycine cleavage system catalyzes the degradation of glycine. The P protein binds the alpha-amino group of glycine through its pyridoxal phosphate cofactor; CO(2) is released and the remaining methylamine moiety is then transferred to the lipoamide cofactor of the H protein. This is Probable glycine dehydrogenase (decarboxylating) subunit 1 from Phenylobacterium zucineum (strain HLK1).